The chain runs to 201 residues: Ras-related protein Rab-10 (201 aa).

16–23 (GDSGVGKT) contributes to the GTP binding site. Residues 38 to 46 (FISTIGIDF) carry the Effector region motif. Residues 64-68 (DTAGQ), 122-125 (NKCD), and 152-154 (SAK) each bind GTP. The segment at 175-201 (PDSTDEQSRDTVNPVQPQRQSSSGGCC) is disordered. Polar residues predominate over residues 184–201 (DTVNPVQPQRQSSSGGCC). S-geranylgeranyl cysteine attachment occurs at residues cysteine 200 and cysteine 201.

Belongs to the small GTPase superfamily. Rab family. In terms of assembly, interacts (GTP-bound form) with ehbp-1 (via C-terminal coiled coil). Interacts (GTP-bound form) with cnt-1 (via C-terminal ankyrin repeat). Interacts (GTP-bound form) with rab-5 GAP, tbc-2 (via putative coiled coil domain). Interacts (GTP-bound form) with amph-1. As to expression, almost ubiquitously expressed. Expressed in intestine, hypodermis, seam cells, body-wall muscles, many neurons, oviduct sheath cell, spermatheca, coelomocytes and pharyngeal and nerve ring.

It is found in the early endosome membrane. The protein localises to the late endosome membrane. It localises to the golgi apparatus membrane. The protein resides in the endosome membrane. It carries out the reaction GTP + H2O = GDP + phosphate + H(+). Its activity is regulated as follows. Rab activation is generally mediated by a guanine exchange factor (GEF), while inactivation through hydrolysis of bound GTP is catalyzed by a GTPase activating protein (GAP). Tbc-4 is a likely GAP of this rab. Denn-4 is a putative GEF of this rab. Its function is as follows. The small GTPases Rab are key regulators of intracellular membrane trafficking, from the formation of transport vesicles to their fusion with membranes. Rabs cycle between an inactive GDP-bound form and an active GTP-bound form that is able to recruit to membranes different set of downstream effectors directly responsible for vesicle formation, movement, tethering and fusion. Required for basolateral endocytic recycling, the return of macromolecules and fluid from endosomes to the plasma membrane, in polarized epithelial cells of the intestine upstream of rme-1. Involved in the formation of the endosomal tubular network that is required for basolateral recycling of clathrin-independent endocytic cargo such as daf-4 in the intestine. Required for the recruitment of cnt-1 effector to endosomal membranes in the intestinal epithelium, which is important for the regulation of levels of endosomal phosphatidylinositol-4,5-bisphosphate, a key phosphoinositide in membrane traffic, and for the recruitment of endosomal membrane-bending proteins, rme-1 and sdpn-1. Recruits the rab-5 GTPase-activating protein tbc-2 to endosomes where it then inactivates rab-5 resulting in removal of rab-5 from membranes, which is necessary for cargo transport from early endosomes to recycling endosomes in the basolateral intestine. Regulates recycling of synaptic membrane AMPA glutamate receptor, glr-1, from intracellular endosomal compartments back to synapses in a cholesterol-dependent endocytosis pathway functioning after clathrin-independent endocytosis in command interneurons. Regulates neuropeptide release from dense core vesicles (DCVs) of cholinergic motoneurons in cooperation with rab-5. They reciprocally recruit each other's inactivating GAP molecule leading to local exclusion of one or the other rab protein at the Golgi-endosomal interphase at an essential stage during DCV sorting. Regulates membrane trafficking of membranes and dendrite proteins from the Golgi and/or endosomal compartments to plasma membrane during dendrite morphogenesis together with the exocyst complex in the multi-dendritic PVD sensory neurons acting in a cell-autonomous manner and requiring its GTPase activity. Functions cell-autonomously together with the exocyst complex to regulate dendrite morphogenesis and anterior-posterior patterning of the PVD neurons dendritic arbor by balancing the anterograde and retrograde transport via molecular motors unc-116 (kinesin heavy chain) and dhc-1 (dynein heavy chain) to appropriately transport branching factors, such as dma-1, to the specific subcellular regions of the developing dendrite in its GTPase activity-dependent manner. In Caenorhabditis elegans, this protein is Ras-related protein Rab-10.